A 305-amino-acid polypeptide reads, in one-letter code: ATP synthase gamma chain (305 aa).

It belongs to the ATPase gamma chain family. F-type ATPases have 2 components, CF(1) - the catalytic core - and CF(0) - the membrane proton channel. CF(1) has five subunits: alpha(3), beta(3), gamma(1), delta(1), epsilon(1). CF(0) has three main subunits: a, b and c.

Its subcellular location is the cell membrane. Produces ATP from ADP in the presence of a proton gradient across the membrane. The gamma chain is believed to be important in regulating ATPase activity and the flow of protons through the CF(0) complex. The polypeptide is ATP synthase gamma chain (Streptomyces coelicolor (strain ATCC BAA-471 / A3(2) / M145)).